Reading from the N-terminus, the 271-residue chain is Large ribosomal subunit protein eL8 (271 aa).

Belongs to the eukaryotic ribosomal protein eL8 family.

This is Large ribosomal subunit protein eL8 (RpL7A) from Drosophila melanogaster (Fruit fly).